The following is a 403-amino-acid chain: Ribosomal RNA large subunit methyltransferase I (403 aa).

The PUA domain occupies 9–88 (YPRLVLSKGR…ESIDIAFFTR (80 aa)).

It belongs to the methyltransferase superfamily. RlmI family.

Its subcellular location is the cytoplasm. The catalysed reaction is cytidine(1962) in 23S rRNA + S-adenosyl-L-methionine = 5-methylcytidine(1962) in 23S rRNA + S-adenosyl-L-homocysteine + H(+). In terms of biological role, specifically methylates the cytosine at position 1962 (m5C1962) of 23S rRNA. This Salmonella enteritidis PT4 (strain P125109) protein is Ribosomal RNA large subunit methyltransferase I.